A 172-amino-acid polypeptide reads, in one-letter code: Crossover junction endodeoxyribonuclease RuvC (172 aa).

Active-site residues include aspartate 7, glutamate 67, and aspartate 140. Mg(2+) contacts are provided by aspartate 7, glutamate 67, and aspartate 140.

The protein belongs to the RuvC family. In terms of assembly, homodimer which binds Holliday junction (HJ) DNA. The HJ becomes 2-fold symmetrical on binding to RuvC with unstacked arms; it has a different conformation from HJ DNA in complex with RuvA. In the full resolvosome a probable DNA-RuvA(4)-RuvB(12)-RuvC(2) complex forms which resolves the HJ. Requires Mg(2+) as cofactor.

Its subcellular location is the cytoplasm. The catalysed reaction is Endonucleolytic cleavage at a junction such as a reciprocal single-stranded crossover between two homologous DNA duplexes (Holliday junction).. Its function is as follows. The RuvA-RuvB-RuvC complex processes Holliday junction (HJ) DNA during genetic recombination and DNA repair. Endonuclease that resolves HJ intermediates. Cleaves cruciform DNA by making single-stranded nicks across the HJ at symmetrical positions within the homologous arms, yielding a 5'-phosphate and a 3'-hydroxyl group; requires a central core of homology in the junction. The consensus cleavage sequence is 5'-(A/T)TT(C/G)-3'. Cleavage occurs on the 3'-side of the TT dinucleotide at the point of strand exchange. HJ branch migration catalyzed by RuvA-RuvB allows RuvC to scan DNA until it finds its consensus sequence, where it cleaves and resolves the cruciform DNA. The chain is Crossover junction endodeoxyribonuclease RuvC from Syntrophomonas wolfei subsp. wolfei (strain DSM 2245B / Goettingen).